A 254-amino-acid polypeptide reads, in one-letter code: GPI alpha-1,4-mannosyltransferase I, stabilizing subunit (254 aa).

Residues Met-1 to Ala-22 form the signal peptide. The Lumenal portion of the chain corresponds to Asp-23–Leu-226. An N-linked (GlcNAc...) asparagine glycan is attached at Asn-211. A helical membrane pass occupies residues Val-227–Phe-247. Residues Lys-248–Leu-254 are Cytoplasmic-facing.

This sequence belongs to the PIGX family. Part of the glycosylphosphatidylinositol-mannosyltransferase I complex that is composed of PIGM and PIGX. Interacts with PIGM; PIGX stabilizes PIGM.

It is found in the endoplasmic reticulum membrane. It functions in the pathway glycolipid biosynthesis; glycosylphosphatidylinositol-anchor biosynthesis. Functionally, stabilizing subunit of the glycosylphosphatidylinositol-mannosyltransferase I complex which catalyzes the transfer of the first mannose, via an alpha-1,4 bond from a dolichol-phosphate-mannose (Dol-P-Man) to the glucosaminyl acyl phosphatidylinositol (GlcN-(acyl)PI) intermediate to generate alpha-D-Man-(1-&gt;4)-alpha-D-GlcN-(1-&gt;6)-(1-radyl,2-acyl-sn-glycero-3-phospho)-2-acyl-inositol and participates in the sixth step of the glycosylphosphatidylinositol-anchor biosynthesis. Probably acts by stabilizing the mannosyltransferase PIGM. This Mus musculus (Mouse) protein is GPI alpha-1,4-mannosyltransferase I, stabilizing subunit.